Reading from the N-terminus, the 122-residue chain is Allatotropin (122 aa).

Residues 1–23 (MRVILAITLLFVAGSFIATASKG) form the signal peptide. A propeptide spanning residues 24–40 (RNYPRFFKHRMKLREIR) is cleaved from the precursor. The residue at position 53 (phenylalanine 53) is a Phenylalanine amide. The propeptide occupies 57 to 122 (ESPAERIPDL…GDDSKKGTIA (66 aa)).

Expressed in brain and ventral ganglia but not in the retrocerebral complex (at protein level).

The protein localises to the secreted. Neuropeptide stimulator of juvenile hormone synthesis. This is Allatotropin from Camponotus floridanus (Florida carpenter ant).